Here is a 213-residue protein sequence, read N- to C-terminus: Ribosomal RNA small subunit methyltransferase G (213 aa).

S-adenosyl-L-methionine-binding positions include Gly75, Phe80, 128-129 (IE), and Arg144.

This sequence belongs to the methyltransferase superfamily. RNA methyltransferase RsmG family.

The protein resides in the cytoplasm. It carries out the reaction guanosine(527) in 16S rRNA + S-adenosyl-L-methionine = N(7)-methylguanosine(527) in 16S rRNA + S-adenosyl-L-homocysteine. Its function is as follows. Specifically methylates the N7 position of guanine in position 527 of 16S rRNA. This chain is Ribosomal RNA small subunit methyltransferase G, found in Brucella abortus (strain S19).